A 431-amino-acid polypeptide reads, in one-letter code: Glutamyl-tRNA(Gln) amidotransferase subunit A (431 aa).

Catalysis depends on charge relay system residues Lys-55 and Ser-130. Ser-154 functions as the Acyl-ester intermediate in the catalytic mechanism.

Belongs to the amidase family. GatA subfamily. Heterotrimer of A, B and C subunits.

It catalyses the reaction L-glutamyl-tRNA(Gln) + L-glutamine + ATP + H2O = L-glutaminyl-tRNA(Gln) + L-glutamate + ADP + phosphate + H(+). Allows the formation of correctly charged Gln-tRNA(Gln) through the transamidation of misacylated Glu-tRNA(Gln) in organisms which lack glutaminyl-tRNA synthetase. The reaction takes place in the presence of glutamine and ATP through an activated gamma-phospho-Glu-tRNA(Gln). The chain is Glutamyl-tRNA(Gln) amidotransferase subunit A from Methanococcus maripaludis (strain C6 / ATCC BAA-1332).